Consider the following 147-residue polypeptide: PTPN13-like protein, Y-linked (147 aa).

In terms of tissue distribution, expressed in testis. Detected in spermatocytes, spermatids and spermatozoa (at protein level).

The protein is PTPN13-like protein, Y-linked (PRY) of Homo sapiens (Human).